Here is a 101-residue protein sequence, read N- to C-terminus: Threonine-rich inner membrane protein GfcA (101 aa).

Positions 1-21 (MKHKLSAILMAFMLTTPAAFA) are cleaved as a signal peptide. Residues 22-59 (APEATNGTEATTGTTGTTTTTTGATTTATTTGGVAAGA) lie on the Cytoplasmic side of the membrane. Residues 24–45 (EATNGTEATTGTTGTTTTTTGA) form a disordered region. The chain crosses the membrane as a helical span at residues 60-80 (VGTATVVGVATAVGVATLAVV). At 81 to 101 (AANDSGDGGSHNTSTTTSTTR) the chain is on the periplasmic side. A disordered region spans residues 82-101 (ANDSGDGGSHNTSTTTSTTR).

The protein localises to the cell inner membrane. This is Threonine-rich inner membrane protein GfcA (gfcA) from Escherichia coli (strain K12).